The sequence spans 436 residues: Enolase (436 aa).

Q167 is a binding site for (2R)-2-phosphoglycerate. Catalysis depends on E209, which acts as the Proton donor. Residues D246, E291, and D318 each coordinate Mg(2+). Positions 343, 372, 373, and 394 each coordinate (2R)-2-phosphoglycerate. K343 (proton acceptor) is an active-site residue.

Belongs to the enolase family. As to quaternary structure, component of the RNA degradosome, a multiprotein complex involved in RNA processing and mRNA degradation. Mg(2+) is required as a cofactor.

It localises to the cytoplasm. The protein resides in the secreted. It is found in the cell surface. It carries out the reaction (2R)-2-phosphoglycerate = phosphoenolpyruvate + H2O. It participates in carbohydrate degradation; glycolysis; pyruvate from D-glyceraldehyde 3-phosphate: step 4/5. Functionally, catalyzes the reversible conversion of 2-phosphoglycerate (2-PG) into phosphoenolpyruvate (PEP). It is essential for the degradation of carbohydrates via glycolysis. This Haemophilus influenzae (strain ATCC 51907 / DSM 11121 / KW20 / Rd) protein is Enolase.